We begin with the raw amino-acid sequence, 406 residues long: Tyrosine--tRNA ligase (406 aa).

Tyrosine 35 is an L-tyrosine binding site. The 'HIGH' region signature appears at 40-49 (PTADSLHVGH). L-tyrosine contacts are provided by tyrosine 168 and glutamine 172. Positions 228-232 (KMGKT) match the 'KMSKS' region motif. Lysine 231 serves as a coordination point for ATP. The S4 RNA-binding domain maps to 340 to 404 (SELLDILVEA…RGKKNYNKIV (65 aa)).

The protein belongs to the class-I aminoacyl-tRNA synthetase family. TyrS type 1 subfamily. In terms of assembly, homodimer.

Its subcellular location is the cytoplasm. The catalysed reaction is tRNA(Tyr) + L-tyrosine + ATP = L-tyrosyl-tRNA(Tyr) + AMP + diphosphate + H(+). Functionally, catalyzes the attachment of tyrosine to tRNA(Tyr) in a two-step reaction: tyrosine is first activated by ATP to form Tyr-AMP and then transferred to the acceptor end of tRNA(Tyr). The protein is Tyrosine--tRNA ligase of Clostridium perfringens (strain ATCC 13124 / DSM 756 / JCM 1290 / NCIMB 6125 / NCTC 8237 / Type A).